A 71-amino-acid chain; its full sequence is Disintegrin horridistatin-2 (71 aa).

One can recognise a Disintegrin domain in the interval 1-71; it reads GEECDCGSPA…ADCPRNGLYG (71 aa). Intrachain disulfides connect cysteine 4/cysteine 19, cysteine 6/cysteine 14, cysteine 13/cysteine 36, cysteine 27/cysteine 33, cysteine 32/cysteine 57, and cysteine 45/cysteine 64. Positions 49–51 match the Cell attachment site motif; sequence RGD.

The protein belongs to the venom metalloproteinase (M12B) family. P-II subfamily. P-IIa sub-subfamily. Monomer (disintegrin). Expressed by the venom gland.

It localises to the secreted. Inhibits ADP-induced platelet aggregation (IC(50) is 16.2 nM) by binding to alpha-IIb/beta-3 (ITGA2B/ITGB3). This is Disintegrin horridistatin-2 from Crotalus horridus (Timber rattlesnake).